The sequence spans 285 residues: Probable methyltransferase ltbC (285 aa).

The interval 1–22 (MASTGQTNNYKQGYSSQTVETQ) is disordered.

This sequence belongs to the class I-like SAM-binding methyltransferase superfamily. Monomer.

In terms of biological role, probable methyltransferase; part of the gene cluster that mediates the biosynthesis of luteodienoside A, a glycosylated polyketide consisting of an unusual 1-O-beta-D-glucopyranosyl-myo-inositol (glucinol) ester of 3-hydroxy-2,2,4-trimethylocta-4,6-dienoic acid. The HR-PKS ltbA produces the trimethylated polyketide chain from acetyl-CoA, malonyl-CoA and S-adenosylmethionine (SAM), and the ltbA cAT domain then uses glucinol produced by the glycosyltransferase ltbB as an offloading substrate to release luteodienoside A. Since ltbA and ltbB are sufficient for the biosynthesis of luteodienoside A, the functions of the methyltransferase ltbC and the FAD-binding monooxygenase ltbD within the pathway remain obscur. The sequence is that of Probable methyltransferase ltbC from Aspergillus luteorubrus.